The primary structure comprises 211 residues: Adenylyl-sulfate kinase (211 aa).

Residue 36–43 (GLSGSGKS) coordinates ATP. The active-site Phosphoserine intermediate is Ser110.

The protein belongs to the APS kinase family.

It catalyses the reaction adenosine 5'-phosphosulfate + ATP = 3'-phosphoadenylyl sulfate + ADP + H(+). The protein operates within sulfur metabolism; hydrogen sulfide biosynthesis; sulfite from sulfate: step 2/3. Catalyzes the synthesis of activated sulfate. The chain is Adenylyl-sulfate kinase (cysC) from Buchnera aphidicola subsp. Schizaphis graminum (strain Sg).